The following is a 262-amino-acid chain: Hydroxyethylthiazole kinase (262 aa).

A substrate-binding site is contributed by Met50. Residues Arg125 and Thr171 each contribute to the ATP site. Residue Gly198 coordinates substrate.

Belongs to the Thz kinase family. Mg(2+) serves as cofactor.

It carries out the reaction 5-(2-hydroxyethyl)-4-methylthiazole + ATP = 4-methyl-5-(2-phosphooxyethyl)-thiazole + ADP + H(+). It functions in the pathway cofactor biosynthesis; thiamine diphosphate biosynthesis; 4-methyl-5-(2-phosphoethyl)-thiazole from 5-(2-hydroxyethyl)-4-methylthiazole: step 1/1. Its function is as follows. Catalyzes the phosphorylation of the hydroxyl group of 4-methyl-5-beta-hydroxyethylthiazole (THZ). The chain is Hydroxyethylthiazole kinase from Escherichia coli (strain SMS-3-5 / SECEC).